The primary structure comprises 142 residues: Type 3 secretion system pilotin (142 aa).

Residues 1-23 form the signal peptide; sequence MIRHGSNKLKIFILSILLLTLSG. Cys24 carries the N-palmitoyl cysteine lipid modification. Cys24 carries the S-diacylglycerol cysteine lipid modification.

Belongs to the MxiM family. Monomer. Interacts with the secretin MxiD/SctC.

It localises to the cell outer membrane. Involved in the synthesis of the type III secretion system (T3SS), also called injectisome, which is used to inject bacterial effector proteins into eukaryotic host cells. Pilot protein that is required for the proper localization of the secretin MxiD/SctC in the outer membrane. Also influences both MxiD/SctC multimerization and stability. Required for both Ipa translocation and tissue culture cell invasion. Binds lipids. The chain is Type 3 secretion system pilotin from Shigella flexneri.